Here is a 141-residue protein sequence, read N- to C-terminus: Nucleoside diphosphate kinase (141 aa).

Residues lysine 11, phenylalanine 59, arginine 87, threonine 93, arginine 104, and asparagine 114 each coordinate ATP. The Pros-phosphohistidine intermediate role is filled by histidine 117.

Belongs to the NDK family. In terms of assembly, homotetramer. It depends on Mg(2+) as a cofactor.

Its subcellular location is the cytoplasm. The catalysed reaction is a 2'-deoxyribonucleoside 5'-diphosphate + ATP = a 2'-deoxyribonucleoside 5'-triphosphate + ADP. It carries out the reaction a ribonucleoside 5'-diphosphate + ATP = a ribonucleoside 5'-triphosphate + ADP. Functionally, major role in the synthesis of nucleoside triphosphates other than ATP. The ATP gamma phosphate is transferred to the NDP beta phosphate via a ping-pong mechanism, using a phosphorylated active-site intermediate. The sequence is that of Nucleoside diphosphate kinase from Nitrosomonas eutropha (strain DSM 101675 / C91 / Nm57).